Consider the following 600-residue polypeptide: Autophagy-related protein 22-2 (600 aa).

A disordered region spans residues 1–30; that stretch reads MAFASPPASPPDEDGQARAPRYPGEDTTPT. A run of 4 helical transmembrane segments spans residues 41–61, 117–137, 149–168, and 186–206; these read YGIA…PLTL, SFAM…LISF, TLLV…FVFI, and CLGS…ASDP. Residues 234-257 form a disordered region; sequence SFDGDEPTHRPPTGLGLGGATGTS. 4 helical membrane-spanning segments follow: residues 271 to 291, 304 to 324, 378 to 398, and 414 to 434; these read GVGL…LLLF, TLPL…FTMV, VIVF…VSGT, and VALL…LWPI. N-linked (GlcNAc...) asparagine glycosylation occurs at Asn-444. A run of 4 helical transmembrane segments spans residues 449–469, 484–506, 526–546, and 549–569; these read VCIA…IPLF, YPLA…SFFG, KGSS…TGQV, and GFFF…MVDA.

This sequence belongs to the ATG22 family.

Its subcellular location is the vacuole membrane. Vacuolar effluxer which mediate the efflux of amino acids resulting from autophagic degradation. The release of autophagic amino acids allows the maintenance of protein synthesis and viability during nitrogen starvation. The chain is Autophagy-related protein 22-2 (atg22-2) from Aspergillus niger (strain ATCC MYA-4892 / CBS 513.88 / FGSC A1513).